Here is a 215-residue protein sequence, read N- to C-terminus: Small ribosomal subunit protein uS7 (215 aa).

The protein belongs to the universal ribosomal protein uS7 family. As to quaternary structure, part of the 30S ribosomal subunit.

One of the primary rRNA binding proteins, it binds directly to 16S rRNA where it nucleates assembly of the head domain of the 30S subunit. Is located at the subunit interface close to the decoding center. The sequence is that of Small ribosomal subunit protein uS7 from Thermococcus celer.